A 596-amino-acid polypeptide reads, in one-letter code: Choline dehydrogenase, mitochondrial (596 aa).

The transit peptide at 1 to 34 (MWQVLRGWRKGWQSPRGALAWAVQGQPCPPCSRA) directs the protein to the mitochondrion. FAD is bound at residue 44–73 (TFVVVGAGSAGCVLASRLTEDPNHRVLLLE). An N6-succinyllysine modification is found at K438. An N6-acetyllysine; alternate mark is found at K486 and K498. 2 positions are modified to N6-succinyllysine; alternate: K486 and K498. H513 serves as the catalytic Proton acceptor. Position 582 is an N6-acetyllysine (K582).

The protein belongs to the GMC oxidoreductase family. It depends on FAD as a cofactor. Acetylation of Lys-498 is observed in liver mitochondria from fasted mice but not from fed mice.

It localises to the mitochondrion inner membrane. The catalysed reaction is choline + A = betaine aldehyde + AH2. It functions in the pathway amine and polyamine biosynthesis; betaine biosynthesis via choline pathway; betaine aldehyde from choline (cytochrome c reductase route): step 1/1. The polypeptide is Choline dehydrogenase, mitochondrial (Chdh) (Mus musculus (Mouse)).